Here is a 447-residue protein sequence, read N- to C-terminus: Dihydrolipoyllysine-residue acetyltransferase component of pyruvate dehydrogenase complex (447 aa).

Residues 2–78 (PINITMPALS…KVNALIAVLA (77 aa)) form the Lipoyl-binding domain. K43 carries the post-translational modification N6-lipoyllysine. Positions 91–140 (GNGAAGAVPAPKPKETAETAPAAAPAPAAAPAPQAAAPASPAPADGEGKR) are disordered. Positions 108-134 (ETAPAAAPAPAAAPAPQAAAPASPAPA) are enriched in low complexity. A Peripheral subunit-binding (PSBD) domain is found at 142–179 (FSSPLARRLAKEAGIDLSAIAGSGPHGRVVKKDVETAV). Residue H420 is part of the active site.

The protein belongs to the 2-oxoacid dehydrogenase family. As to quaternary structure, forms a 24-polypeptide structural core with octahedral symmetry. (R)-lipoate serves as cofactor.

It carries out the reaction N(6)-[(R)-dihydrolipoyl]-L-lysyl-[protein] + acetyl-CoA = N(6)-[(R)-S(8)-acetyldihydrolipoyl]-L-lysyl-[protein] + CoA. Functionally, the pyruvate dehydrogenase complex catalyzes the overall conversion of pyruvate to acetyl-CoA and CO(2). It contains multiple copies of three enzymatic components: pyruvate dehydrogenase (E1), dihydrolipoamide acetyltransferase (E2) and lipoamide dehydrogenase (E3). This is Dihydrolipoyllysine-residue acetyltransferase component of pyruvate dehydrogenase complex (pdhC) from Rhizobium meliloti (strain 1021) (Ensifer meliloti).